Consider the following 271-residue polypeptide: Acyl-[acyl-carrier-protein]--UDP-N-acetylglucosamine O-acyltransferase (271 aa).

This sequence belongs to the transferase hexapeptide repeat family. LpxA subfamily. Homotrimer.

The protein localises to the cytoplasm. It catalyses the reaction a (3R)-hydroxyacyl-[ACP] + UDP-N-acetyl-alpha-D-glucosamine = a UDP-3-O-[(3R)-3-hydroxyacyl]-N-acetyl-alpha-D-glucosamine + holo-[ACP]. The protein operates within glycolipid biosynthesis; lipid IV(A) biosynthesis; lipid IV(A) from (3R)-3-hydroxytetradecanoyl-[acyl-carrier-protein] and UDP-N-acetyl-alpha-D-glucosamine: step 1/6. Its function is as follows. Involved in the biosynthesis of lipid A, a phosphorylated glycolipid that anchors the lipopolysaccharide to the outer membrane of the cell. In Ralstonia nicotianae (strain ATCC BAA-1114 / GMI1000) (Ralstonia solanacearum), this protein is Acyl-[acyl-carrier-protein]--UDP-N-acetylglucosamine O-acyltransferase.